A 93-amino-acid chain; its full sequence is Pyrimidine/purine nucleoside phosphorylase (93 aa).

This sequence belongs to the nucleoside phosphorylase PpnP family.

It carries out the reaction a purine D-ribonucleoside + phosphate = a purine nucleobase + alpha-D-ribose 1-phosphate. The catalysed reaction is adenosine + phosphate = alpha-D-ribose 1-phosphate + adenine. It catalyses the reaction cytidine + phosphate = cytosine + alpha-D-ribose 1-phosphate. The enzyme catalyses guanosine + phosphate = alpha-D-ribose 1-phosphate + guanine. It carries out the reaction inosine + phosphate = alpha-D-ribose 1-phosphate + hypoxanthine. The catalysed reaction is thymidine + phosphate = 2-deoxy-alpha-D-ribose 1-phosphate + thymine. It catalyses the reaction uridine + phosphate = alpha-D-ribose 1-phosphate + uracil. The enzyme catalyses xanthosine + phosphate = alpha-D-ribose 1-phosphate + xanthine. Catalyzes the phosphorolysis of diverse nucleosides, yielding D-ribose 1-phosphate and the respective free bases. Can use uridine, adenosine, guanosine, cytidine, thymidine, inosine and xanthosine as substrates. Also catalyzes the reverse reactions. In Marinobacter nauticus (strain ATCC 700491 / DSM 11845 / VT8) (Marinobacter aquaeolei), this protein is Pyrimidine/purine nucleoside phosphorylase.